A 75-amino-acid chain; its full sequence is UPF0352 protein ETA_12580 (75 aa).

This sequence belongs to the UPF0352 family.

This is UPF0352 protein ETA_12580 from Erwinia tasmaniensis (strain DSM 17950 / CFBP 7177 / CIP 109463 / NCPPB 4357 / Et1/99).